Reading from the N-terminus, the 962-residue chain is UBP9-binding protein bun107 (962 aa).

WD repeat units follow at residues 25 to 69 (DANC…GKAS), 77 to 116 (AHSA…ASCL), 121 to 162 (EHTD…EVMR), 172 to 211 (VVGP…RITD), 214 to 253 (GHTD…CLFS), and 302 to 339 (KQDA…NQDV). The segment covering 568-578 (SPLRIRSRPSP) has biased composition (low complexity). Disordered stretches follow at residues 568–615 (SPLR…QIPS) and 702–758 (RAAS…PREL). Over residues 707–723 (RVFSTGTSVTSPQALSK) the composition is skewed to polar residues. Residue Ser717 is modified to Phosphoserine. The segment covering 724-738 (TNNTVNNAANTENNT) has biased composition (low complexity).

In terms of assembly, interacts with ubp9 and bun62.

The protein localises to the cytoplasm. Its subcellular location is the cell tip. Required for the ubp9 recruitment to septa and cell tips but also for its enzymatic activity at these specific locations. The protein is UBP9-binding protein bun107 (bun107) of Schizosaccharomyces pombe (strain 972 / ATCC 24843) (Fission yeast).